Reading from the N-terminus, the 521-residue chain is Ribonuclease Y (521 aa).

A helical transmembrane segment spans residues 5-25 (TVWILISILLATVGAVVGFFV). The interval 87-117 (KQENRLMQKEENLDRKDETLDNRERQLEKKE) is disordered. The 64-residue stretch at 211–274 (TVSVVNLPND…ETARIALDKL (64 aa)) folds into the KH domain. Residues 337–430 (VLKHSMEVAY…VAAADALSAA (94 aa)) form the HD domain.

Belongs to the RNase Y family.

Its subcellular location is the cell membrane. Its function is as follows. Endoribonuclease that initiates mRNA decay. The protein is Ribonuclease Y of Bacillus mycoides (strain KBAB4) (Bacillus weihenstephanensis).